Consider the following 502-residue polypeptide: Type-2 serine--tRNA ligase (502 aa).

Residue Ala-304 coordinates L-serine. Cys-306 is a binding site for Zn(2+). Residue Arg-336 participates in L-serine binding. ATP is bound by residues 336 to 338 and 347 to 348; these read RYE and RV. L-serine contacts are provided by residues 353–355 and Gln-400; that span reads RVE. Glu-355 is a binding site for Zn(2+). Position 432 (Glu-432) interacts with ATP. Residue Asn-435 coordinates L-serine. Zn(2+) is bound at residue Cys-461. Arg-468 serves as a coordination point for ATP.

It belongs to the class-II aminoacyl-tRNA synthetase family. Type-2 seryl-tRNA synthetase subfamily. Homodimer. Requires Zn(2+) as cofactor.

It is found in the cytoplasm. The catalysed reaction is tRNA(Ser) + L-serine + ATP = L-seryl-tRNA(Ser) + AMP + diphosphate + H(+). It carries out the reaction tRNA(Sec) + L-serine + ATP = L-seryl-tRNA(Sec) + AMP + diphosphate + H(+). Its pathway is aminoacyl-tRNA biosynthesis; selenocysteinyl-tRNA(Sec) biosynthesis; L-seryl-tRNA(Sec) from L-serine and tRNA(Sec): step 1/1. In terms of biological role, catalyzes the attachment of serine to tRNA(Ser). Is also able to aminoacylate tRNA(Sec) with serine, to form the misacylated tRNA L-seryl-tRNA(Sec), which will be further converted into selenocysteinyl-tRNA(Sec). This Methanococcoides burtonii (strain DSM 6242 / NBRC 107633 / OCM 468 / ACE-M) protein is Type-2 serine--tRNA ligase.